A 193-amino-acid chain; its full sequence is Hydroxyacylglutathione hydrolase-like protein (193 aa).

Positions 54, 56, 58, 59, and 110 each coordinate Zn(2+).

It belongs to the metallo-beta-lactamase superfamily. Glyoxalase II family. It depends on Zn(2+) as a cofactor.

Its function is as follows. Hydrolase acting on ester bonds. This chain is Hydroxyacylglutathione hydrolase-like protein (HAGHL), found in Bos taurus (Bovine).